The primary structure comprises 143 residues: Succinate dehydrogenase assembly factor 2, mitochondrial (143 aa).

The protein belongs to the SDHAF2 family. As to quaternary structure, interacts with the flavoprotein subunit within the SDH catalytic dimer.

The protein localises to the mitochondrion matrix. Its function is as follows. Plays an essential role in the assembly of succinate dehydrogenase (SDH), an enzyme complex (also referred to as respiratory complex II) that is a component of both the tricarboxylic acid (TCA) cycle and the mitochondrial electron transport chain, and which couples the oxidation of succinate to fumarate with the reduction of ubiquinone (coenzyme Q) to ubiquinol. Required for flavinylation (covalent attachment of FAD) of the flavoprotein subunit of the SDH catalytic dimer. In Schizosaccharomyces japonicus (strain yFS275 / FY16936) (Fission yeast), this protein is Succinate dehydrogenase assembly factor 2, mitochondrial.